A 63-amino-acid chain; its full sequence is uncharacterized protein (63 aa).

This is an uncharacterized protein from Azospirillum brasilense.